Here is a 399-residue protein sequence, read N- to C-terminus: Phosphoglycerate kinase (399 aa).

Residues 22-24 (DFN), Arg37, 60-63 (HFGR), Arg118, and Arg151 each bind substrate. ATP is bound by residues Lys201, Glu322, and 352-355 (GGDS).

This sequence belongs to the phosphoglycerate kinase family. As to quaternary structure, monomer.

The protein localises to the cytoplasm. The catalysed reaction is (2R)-3-phosphoglycerate + ATP = (2R)-3-phospho-glyceroyl phosphate + ADP. It participates in carbohydrate degradation; glycolysis; pyruvate from D-glyceraldehyde 3-phosphate: step 2/5. The sequence is that of Phosphoglycerate kinase from Wolbachia sp. subsp. Brugia malayi (strain TRS).